A 552-amino-acid chain; its full sequence is Urocanate hydratase (552 aa).

NAD(+)-binding positions include 49 to 50 (GG), Gln127, 173 to 175 (GMG), Asp193, 239 to 240 (NA), 260 to 264 (QTSAH), 270 to 271 (YI), and Tyr319. Residue Cys407 is part of the active site. Gly489 serves as a coordination point for NAD(+).

Belongs to the urocanase family. NAD(+) serves as cofactor.

Its subcellular location is the cytoplasm. It catalyses the reaction 4-imidazolone-5-propanoate = trans-urocanate + H2O. Its pathway is amino-acid degradation; L-histidine degradation into L-glutamate; N-formimidoyl-L-glutamate from L-histidine: step 2/3. Its function is as follows. Catalyzes the conversion of urocanate to 4-imidazolone-5-propionate. This Bacillus mycoides (strain KBAB4) (Bacillus weihenstephanensis) protein is Urocanate hydratase.